A 408-amino-acid polypeptide reads, in one-letter code: Argininosuccinate synthase (408 aa).

ATP is bound by residues 10 to 18 and Ala-37; that span reads AYSGGLDTS. The L-citrulline site is built by Tyr-90 and Ser-95. Gly-120 contributes to the ATP binding site. The L-aspartate site is built by Thr-122, Asn-126, and Asp-127. L-citrulline is bound at residue Asn-126. 5 residues coordinate L-citrulline: Arg-130, Ser-181, Ser-190, Glu-266, and Tyr-278.

This sequence belongs to the argininosuccinate synthase family. Type 1 subfamily. Homotetramer.

Its subcellular location is the cytoplasm. It catalyses the reaction L-citrulline + L-aspartate + ATP = 2-(N(omega)-L-arginino)succinate + AMP + diphosphate + H(+). It functions in the pathway amino-acid biosynthesis; L-arginine biosynthesis; L-arginine from L-ornithine and carbamoyl phosphate: step 2/3. The sequence is that of Argininosuccinate synthase from Laribacter hongkongensis (strain HLHK9).